Consider the following 67-residue polypeptide: Myrmicitoxin(1)-Pm6a (67 aa).

An N-terminal signal peptide occupies residues 1 to 25 (MRSLYLSFSLTIIFVLVIMHAEAKA). The propeptide occupies 26–37 (ISEPNAIAEADP). Val66 is modified (valine amide).

This sequence belongs to the formicidae venom clade 3 family. In terms of tissue distribution, expressed by the venom gland.

The protein localises to the secreted. Functionally, toxin that causes a rapid and irreversible paralysis when intrathoracically injected into insects (blowflies). Does not cause spontaneous nocifensive behaviors by intraplantar injection in mice. Exhibits hemolytic and cytotoxic activities on HEK293 cells. This chain is Myrmicitoxin(1)-Pm6a, found in Pogonomyrmex maricopa (Maricopa harvester ant).